A 175-amino-acid polypeptide reads, in one-letter code: NADH-ubiquinone oxidoreductase chain 6 (175 aa).

The next 5 membrane-spanning stretches (helical) occupy residues 1–21 (MMTYFVFILSTVFVIGFVGFS), 27–47 (VYGGVGLIISGGVGCGIVMNF), 49–69 (GSFLGLMVFLIYLGGMMVVFG), 88–108 (VVLGAFVSGLFMEMLLVLYVL), and 149–169 (YGVWLVVVTGWSLFIAVVVIM).

It belongs to the complex I subunit 6 family. Core subunit of respiratory chain NADH dehydrogenase (Complex I) which is composed of 45 different subunits.

It localises to the mitochondrion inner membrane. It catalyses the reaction a ubiquinone + NADH + 5 H(+)(in) = a ubiquinol + NAD(+) + 4 H(+)(out). Its function is as follows. Core subunit of the mitochondrial membrane respiratory chain NADH dehydrogenase (Complex I) which catalyzes electron transfer from NADH through the respiratory chain, using ubiquinone as an electron acceptor. Essential for the catalytic activity and assembly of complex I. This is NADH-ubiquinone oxidoreductase chain 6 (MT-ND6) from Pteropus dasymallus (Ryukyu flying fox).